The chain runs to 2223 residues: Protein CHROMATIN REMODELING 4 (2223 aa).

The interval Phe-39–Lys-69 is disordered. The span at Leu-55 to Lys-69 shows a compositional bias: basic and acidic residues. The PHD-type zinc-finger motif lies at Tyr-75–Asn-122. Basic and acidic residues-rich tracts occupy residues Glu-173–Gly-187, Ser-207–Gly-223, Glu-248–Lys-285, and Glu-294–Lys-305. 3 disordered regions span residues Glu-173–Asp-235, Glu-248–Asp-381, and Ala-441–Gly-474. The span at Thr-306–Leu-315 shows a compositional bias: basic residues. Residues Glu-353 to Ala-368 show a composition bias toward basic and acidic residues. Residues Thr-372–Asp-381 are compositionally biased toward polar residues. The segment covering Ala-441–Asp-466 has biased composition (basic and acidic residues). 2 Chromo domains span residues Glu-531 to Lys-587 and Lys-601 to Ser-663. In terms of domain architecture, Helicase ATP-binding spans Arg-701–Ser-878. Asp-714–Thr-721 contributes to the ATP binding site. Positions Asp-829–His-832 match the DEAH box motif. Positions Leu-902–His-909 match the Nuclear localization signal motif. The Helicase C-terminal domain occupies Leu-1008–Leu-1167. Disordered regions lie at residues Glu-1268–Val-1300, Glu-1341–Lys-1380, Arg-1394–Pro-1463, Ser-1483–Pro-1511, Leu-1760–Phe-1779, and Ile-2006–Asp-2223. Residues Glu-1363–Lys-1380 show a composition bias toward basic and acidic residues. Residues Arg-1375 to Leu-1402 adopt a coiled-coil conformation. Polar residues predominate over residues Pro-1403–Ala-1414. Pro residues predominate over residues Phe-2009–Pro-2019. Positions Ser-2025–His-2035 are enriched in basic residues. Composition is skewed to polar residues over residues Gln-2039–Gln-2061, Gly-2075–Leu-2096, and Thr-2128–Gln-2148. Basic and acidic residues predominate over residues Asp-2157–Glu-2171. Positions Ile-2189–Val-2215 form a coiled coil. Over residues Ala-2198–Glu-2210 the composition is skewed to acidic residues.

This sequence belongs to the SNF2/RAD54 helicase family.

It localises to the nucleus. Its function is as follows. Chromatin-remodeling protein that binds DNA through histones and regulates gene transcription. May specifically recognize and bind trimethylated 'Lys-27' (H3K27me3) and non-methylated 'Lys-4' of histone H3. Probable chromatin remodeling factor. This Arabidopsis thaliana (Mouse-ear cress) protein is Protein CHROMATIN REMODELING 4.